Here is a 500-residue protein sequence, read N- to C-terminus: Apolipoprotein N-acyltransferase (500 aa).

6 helical membrane-spanning segments follow: residues 5–25, 38–58, 74–94, 111–131, 145–165, and 185–205; these read VAPF…WIFV, LLLL…FWIT, LAIT…FGAI, ILIG…GPLW, AILH…IVSV, and LAIA…LYTA. The 248-residue stretch at 215-462 folds into the CN hydrolase domain; sequence LKVGIVQGNI…ETIYRRQTQN (248 aa). Glutamate 261 serves as the catalytic Proton acceptor. The active site involves lysine 318. The Nucleophile role is filled by cysteine 369. A helical transmembrane segment spans residues 469–489; that stretch reads DWFTPLLVGLSFLGWSLNIFW.

Belongs to the CN hydrolase family. Apolipoprotein N-acyltransferase subfamily.

The protein localises to the cell inner membrane. The catalysed reaction is N-terminal S-1,2-diacyl-sn-glyceryl-L-cysteinyl-[lipoprotein] + a glycerophospholipid = N-acyl-S-1,2-diacyl-sn-glyceryl-L-cysteinyl-[lipoprotein] + a 2-acyl-sn-glycero-3-phospholipid + H(+). The protein operates within protein modification; lipoprotein biosynthesis (N-acyl transfer). Catalyzes the phospholipid dependent N-acylation of the N-terminal cysteine of apolipoprotein, the last step in lipoprotein maturation. In Nostoc sp. (strain PCC 7120 / SAG 25.82 / UTEX 2576), this protein is Apolipoprotein N-acyltransferase.